The chain runs to 102 residues: UPF0122 protein MPN_424 (102 aa).

It belongs to the UPF0122 family.

Might take part in the signal recognition particle (SRP) pathway. This is inferred from the conservation of its genetic proximity to ftsY/ffh. May be a regulatory protein. This is UPF0122 protein MPN_424 from Mycoplasma pneumoniae (strain ATCC 29342 / M129 / Subtype 1) (Mycoplasmoides pneumoniae).